A 360-amino-acid chain; its full sequence is UDP-3-O-acylglucosamine N-acyltransferase (360 aa).

Histidine 248 (proton acceptor) is an active-site residue.

Belongs to the transferase hexapeptide repeat family. LpxD subfamily. As to quaternary structure, homotrimer.

It catalyses the reaction a UDP-3-O-[(3R)-3-hydroxyacyl]-alpha-D-glucosamine + a (3R)-hydroxyacyl-[ACP] = a UDP-2-N,3-O-bis[(3R)-3-hydroxyacyl]-alpha-D-glucosamine + holo-[ACP] + H(+). It functions in the pathway bacterial outer membrane biogenesis; LPS lipid A biosynthesis. Catalyzes the N-acylation of UDP-3-O-acylglucosamine using 3-hydroxyacyl-ACP as the acyl donor. Is involved in the biosynthesis of lipid A, a phosphorylated glycolipid that anchors the lipopolysaccharide to the outer membrane of the cell. The polypeptide is UDP-3-O-acylglucosamine N-acyltransferase (Chlamydia pneumoniae (Chlamydophila pneumoniae)).